The sequence spans 40 residues: Cytolysin SmT-1 (40 aa).

Positions 3 to 12 are plays an important role in the hemolytic activity; that stretch reads ALAGTIIAGA. Residues 11–30 are N-terminal region; the sequence is GASLGFQILDKVLGELGKVS.

This sequence belongs to the actinoporin family. Sea anemone subfamily. As to quaternary structure, octamer or nonamer in membranes. Monomer in the soluble state.

It localises to the secreted. It is found in the nematocyst. Its subcellular location is the target cell membrane. In terms of biological role, pore-forming protein that forms cations-selective hydrophilic pores of around 1 nm and causes cardiac stimulation and cytolysis. Pore formation is a multi-step process that involves specific recognition of membrane sphingomyelin (but neither cholesterol nor phosphatidylcholine) using aromatic rich region and adjacent phosphocholine (POC) binding site, firm binding to the membrane (mainly driven by hydrophobic interactions) accompanied by the transfer of the N-terminal region to the lipid-water interface and finally pore formation after oligomerization of monomers. This toxin shows hemolytic activities. The polypeptide is Cytolysin SmT-1 (Stichodactyla mertensii (Merten's carpet sea anemone)).